The sequence spans 146 residues: Large ribosomal subunit protein uL15 (146 aa).

Positions 1-58 (MNLSNLRAPKKANRNRKRVGRGMGSGHGKTSTRGHKGQRSRSGSRSMRGFEGGQMPLH) are disordered. Basic residues-rich tracts occupy residues 8–20 (APKK…KRVG) and 30–39 (TSTRGHKGQR). The span at 40 to 49 (SRSGSRSMRG) shows a compositional bias: low complexity.

The protein belongs to the universal ribosomal protein uL15 family. Part of the 50S ribosomal subunit.

Functionally, binds to the 23S rRNA. In Acidobacterium capsulatum (strain ATCC 51196 / DSM 11244 / BCRC 80197 / JCM 7670 / NBRC 15755 / NCIMB 13165 / 161), this protein is Large ribosomal subunit protein uL15.